The following is a 288-amino-acid chain: MAAKIIDGKTIAQQVRSEVAQKVQARVAAGLRAPGLAVVLVGSNPASQIYVASKRKACDEVGFVSRSYDLPETTSEAELLALIDTLNADNTIDGILVQLPLPAGIDNVKVLERIAPDKDVDGFHPYNVGRLCQRAPRLRPCTPRGIVTLLERYNIDTYGLNAVVIGASNIVGRPMSMELLLAGCTTTVTHRFTKDLRHHVEHADLLIVAVGKPGFIPGEWIKEGAIVIDVGINRLENGKIVGDVVFDEAAARASYITPVPGGVGPMTVATLIENTLQACIEYHDPQGK.

NADP(+) contacts are provided by residues 166-168 (GAS) and isoleucine 232.

The protein belongs to the tetrahydrofolate dehydrogenase/cyclohydrolase family. As to quaternary structure, homodimer.

The enzyme catalyses (6R)-5,10-methylene-5,6,7,8-tetrahydrofolate + NADP(+) = (6R)-5,10-methenyltetrahydrofolate + NADPH. It carries out the reaction (6R)-5,10-methenyltetrahydrofolate + H2O = (6R)-10-formyltetrahydrofolate + H(+). It participates in one-carbon metabolism; tetrahydrofolate interconversion. Catalyzes the oxidation of 5,10-methylenetetrahydrofolate to 5,10-methenyltetrahydrofolate and then the hydrolysis of 5,10-methenyltetrahydrofolate to 10-formyltetrahydrofolate. In Salmonella enteritidis PT4 (strain P125109), this protein is Bifunctional protein FolD.